A 441-amino-acid polypeptide reads, in one-letter code: Glutamate--tRNA ligase 2 (441 aa).

A 'HIGH' region motif is present at residues 6–16 (PSPTGDMHIGN). The short motif at 231 to 235 (KMSKR) is the 'KMSKS' region element. Lys234 contacts ATP.

It belongs to the class-I aminoacyl-tRNA synthetase family. Glutamate--tRNA ligase type 1 subfamily. In terms of assembly, monomer.

It is found in the cytoplasm. It carries out the reaction tRNA(Glu) + L-glutamate + ATP = L-glutamyl-tRNA(Glu) + AMP + diphosphate. Its function is as follows. Catalyzes the attachment of glutamate to tRNA(Glu) in a two-step reaction: glutamate is first activated by ATP to form Glu-AMP and then transferred to the acceptor end of tRNA(Glu). This is Glutamate--tRNA ligase 2 from Helicobacter hepaticus (strain ATCC 51449 / 3B1).